We begin with the raw amino-acid sequence, 411 residues long: Arginine deiminase (411 aa).

The Amidino-cysteine intermediate role is filled by cysteine 401.

It belongs to the arginine deiminase family.

It localises to the cytoplasm. It catalyses the reaction L-arginine + H2O = L-citrulline + NH4(+). Its pathway is amino-acid degradation; L-arginine degradation via ADI pathway; carbamoyl phosphate from L-arginine: step 1/2. This Staphylococcus haemolyticus (strain JCSC1435) protein is Arginine deiminase.